The primary structure comprises 1445 residues: Spermatogenesis-associated protein 31E1 (1445 aa).

The helical transmembrane segment at 64 to 84 (WMMDFILTSVCGLVLLFLLLL) threads the bilayer. Disordered stretches follow at residues 90–115 (PPSP…SRSR) and 169–262 (VPAK…PDSS). Basic and acidic residues predominate over residues 101–110 (SREPQRERSG). Residues 241–260 (VFPPSPQPHGPLASSPPPPD) are compositionally biased toward pro residues. Residue asparagine 408 is glycosylated (N-linked (GlcNAc...) asparagine). 4 disordered regions span residues 411–430 (TQPQ…TVGN), 460–557 (NPSS…ERTQ), 592–619 (LSQP…PGVV), and 637–761 (QEQS…KEHL). The segment covering 664 to 681 (PQSQAEDTQQALLPSQPS) has biased composition (polar residues). N-linked (GlcNAc...) asparagine glycans are attached at residues asparagine 819, asparagine 906, and asparagine 1160. 4 disordered regions span residues 894–966 (FLGK…TCSL), 1143–1242 (RLPT…IGDK), 1254–1280 (KGQT…RKGG), and 1378–1445 (SPKA…CLAS). Polar residues-rich tracts occupy residues 906–915 (NRTTSKSVPT) and 1148–1165 (APLS…TASQ). The span at 1202–1217 (DKGEAHRRPRTGEQGH) shows a compositional bias: basic and acidic residues.

The protein belongs to the SPATA31 family.

It localises to the membrane. May play a role in spermatogenesis. This Homo sapiens (Human) protein is Spermatogenesis-associated protein 31E1 (SPATA31E1).